We begin with the raw amino-acid sequence, 332 residues long: Anthranilate phosphoribosyltransferase (332 aa).

5-phospho-alpha-D-ribose 1-diphosphate-binding positions include G79, 82-83 (GD), T87, 89-92 (NIST), 107-115 (KHGNRSVSS), and S119. G79 lines the anthranilate pocket. S91 is a binding site for Mg(2+). N110 is an anthranilate binding site. R165 serves as a coordination point for anthranilate. Mg(2+) is bound by residues D223 and E224.

This sequence belongs to the anthranilate phosphoribosyltransferase family. In terms of assembly, homodimer. Requires Mg(2+) as cofactor.

It catalyses the reaction N-(5-phospho-beta-D-ribosyl)anthranilate + diphosphate = 5-phospho-alpha-D-ribose 1-diphosphate + anthranilate. Its pathway is amino-acid biosynthesis; L-tryptophan biosynthesis; L-tryptophan from chorismate: step 2/5. Its function is as follows. Catalyzes the transfer of the phosphoribosyl group of 5-phosphorylribose-1-pyrophosphate (PRPP) to anthranilate to yield N-(5'-phosphoribosyl)-anthranilate (PRA). This chain is Anthranilate phosphoribosyltransferase, found in Vibrio vulnificus (strain YJ016).